The following is a 689-amino-acid chain: Glycine--tRNA ligase beta subunit (689 aa).

This sequence belongs to the class-II aminoacyl-tRNA synthetase family. Tetramer of two alpha and two beta subunits.

It localises to the cytoplasm. It carries out the reaction tRNA(Gly) + glycine + ATP = glycyl-tRNA(Gly) + AMP + diphosphate. This chain is Glycine--tRNA ligase beta subunit, found in Yersinia enterocolitica serotype O:8 / biotype 1B (strain NCTC 13174 / 8081).